A 212-amino-acid chain; its full sequence is Lysozyme g-like protein 2 (212 aa).

The first 19 residues, 1–19 (MLSSVVFWGLIALIGTSRG), serve as a signal peptide directing secretion. 2 cysteine pairs are disulfide-bonded: C39–C92 and C53–C61. E105 is a catalytic residue.

The protein belongs to the glycosyl hydrolase 23 family. As to expression, strong expression detected in the eye and weak expression in the testis. No expression is observed in any other tissues.

Its subcellular location is the secreted. May act as a potent antibacterial protein that may play a role in the innate immunity. This chain is Lysozyme g-like protein 2 (LYG2), found in Homo sapiens (Human).